The primary structure comprises 306 residues: Porphobilinogen deaminase (306 aa).

Cys-239 carries the S-(dipyrrolylmethanemethyl)cysteine modification.

Belongs to the HMBS family. Monomer. It depends on dipyrromethane as a cofactor.

It catalyses the reaction 4 porphobilinogen + H2O = hydroxymethylbilane + 4 NH4(+). The protein operates within porphyrin-containing compound metabolism; protoporphyrin-IX biosynthesis; coproporphyrinogen-III from 5-aminolevulinate: step 2/4. Its function is as follows. Tetrapolymerization of the monopyrrole PBG into the hydroxymethylbilane pre-uroporphyrinogen in several discrete steps. This is Porphobilinogen deaminase (hemC) from Helicobacter pylori (strain ATCC 700392 / 26695) (Campylobacter pylori).